The primary structure comprises 244 residues: Nicotinamidase 1 (244 aa).

Belongs to the isochorismatase family. In terms of tissue distribution, expressed in roots and stems, and at lower levels in flowers, siliques and leaves.

The enzyme catalyses nicotinamide + H2O = nicotinate + NH4(+). The protein operates within cofactor biosynthesis; nicotinate biosynthesis; nicotinate from nicotinamide: step 1/1. Catalyzes the deamidation of nicotinamide, an early step in the NAD(+) salvage pathway. Prevents the accumulation of intracellular nicotinamide, a known inhibitor of poly(ADP-ribose) polymerases (PARP enzymes). The protein is Nicotinamidase 1 of Arabidopsis thaliana (Mouse-ear cress).